We begin with the raw amino-acid sequence, 271 residues long: 5'-nucleotidase SurE (271 aa).

A divalent metal cation-binding residues include Asp-14, Asp-15, Ser-46, and Asn-104.

Belongs to the SurE nucleotidase family. A divalent metal cation serves as cofactor.

Its subcellular location is the cytoplasm. The catalysed reaction is a ribonucleoside 5'-phosphate + H2O = a ribonucleoside + phosphate. Nucleotidase that shows phosphatase activity on nucleoside 5'-monophosphates. This chain is 5'-nucleotidase SurE, found in Gloeothece citriformis (strain PCC 7424) (Cyanothece sp. (strain PCC 7424)).